Reading from the N-terminus, the 103-residue chain is N(4)-acetylcytidine amidohydrolase (103 aa).

The 87-residue stretch at 6-92 (TFFERFEQDI…VIQEIYPGLE (87 aa)) folds into the ASCH domain. Residue Lys20 is the Proton acceptor of the active site. Thr23 (nucleophile) is an active-site residue. The Proton donor role is filled by Glu73.

Belongs to the N(4)-acetylcytidine amidohydrolase family.

It carries out the reaction N(4)-acetylcytidine + H2O = cytidine + acetate + H(+). The enzyme catalyses N(4)-acetyl-2'-deoxycytidine + H2O = 2'-deoxycytidine + acetate + H(+). The catalysed reaction is N(4)-acetylcytosine + H2O = cytosine + acetate + H(+). In terms of biological role, catalyzes the hydrolysis of N(4)-acetylcytidine (ac4C). The chain is N(4)-acetylcytidine amidohydrolase from Shewanella sp. (strain MR-4).